Here is a 243-residue protein sequence, read N- to C-terminus: 1-(5-phosphoribosyl)-5-[(5-phosphoribosylamino)methylideneamino] imidazole-4-carboxamide isomerase (243 aa).

Asp10 (proton acceptor) is an active-site residue. The active-site Proton donor is the Asp129.

The protein belongs to the HisA/HisF family.

It is found in the cytoplasm. The catalysed reaction is 1-(5-phospho-beta-D-ribosyl)-5-[(5-phospho-beta-D-ribosylamino)methylideneamino]imidazole-4-carboxamide = 5-[(5-phospho-1-deoxy-D-ribulos-1-ylimino)methylamino]-1-(5-phospho-beta-D-ribosyl)imidazole-4-carboxamide. It functions in the pathway amino-acid biosynthesis; L-histidine biosynthesis; L-histidine from 5-phospho-alpha-D-ribose 1-diphosphate: step 4/9. This chain is 1-(5-phosphoribosyl)-5-[(5-phosphoribosylamino)methylideneamino] imidazole-4-carboxamide isomerase, found in Nocardia farcinica (strain IFM 10152).